Here is a 391-residue protein sequence, read N- to C-terminus: Na(+)/H(+) antiporter NhaA (391 aa).

Helical transmembrane passes span 14 to 34 (AGGI…NSPL), 59 to 79 (LLLW…GLEV), 95 to 115 (SLPS…YLLF), 124 to 144 (AGWA…MALL), 154 to 174 (VFLL…IALF), 177 to 197 (SDLS…LVGL), 213 to 233 (LILW…GVII), 261 to 281 (FLIL…NMSL), 290 to 310 (IGIA…FSFI), 328 to 348 (IAPV…IASL), and 363 to 383 (LGTL…LSKV).

It belongs to the NhaA Na(+)/H(+) (TC 2.A.33) antiporter family.

Its subcellular location is the cell inner membrane. It catalyses the reaction Na(+)(in) + 2 H(+)(out) = Na(+)(out) + 2 H(+)(in). Na(+)/H(+) antiporter that extrudes sodium in exchange for external protons. The protein is Na(+)/H(+) antiporter NhaA of Shewanella putrefaciens (strain CN-32 / ATCC BAA-453).